The following is a 274-amino-acid chain: Large ribosomal subunit protein bL28m (274 aa).

A disordered region spans residues 249 to 274; the sequence is SETEEFGLGQEEDLFMKEEPKPTKMA. Positions 262–274 are enriched in basic and acidic residues; it reads LFMKEEPKPTKMA.

This sequence belongs to the bacterial ribosomal protein bL28 family. Component of the mitochondrial large ribosomal subunit (mt-LSU). Mature N.crassa 74S mitochondrial ribosomes consist of a small (37S) and a large (54S) subunit. The 37S small subunit contains a 16S ribosomal RNA (16S mt-rRNA) and 32 different proteins. The 54S large subunit contains a 23S rRNA (23S mt-rRNA) and 42 different proteins.

Its subcellular location is the mitochondrion. Functionally, component of the mitochondrial ribosome (mitoribosome), a dedicated translation machinery responsible for the synthesis of mitochondrial genome-encoded proteins, including at least some of the essential transmembrane subunits of the mitochondrial respiratory chain. The mitoribosomes are attached to the mitochondrial inner membrane and translation products are cotranslationally integrated into the membrane. In Neurospora crassa (strain ATCC 24698 / 74-OR23-1A / CBS 708.71 / DSM 1257 / FGSC 987), this protein is Large ribosomal subunit protein bL28m (mrpl24).